Consider the following 456-residue polypeptide: MFDGLKKKLNRFRNDVEETAEEKAEAAADEAESDADAEAESAPADTDNAAVEPEASEPAAADPDADAVGDADAGSEADAVDAADAPADAESSSAAVEADAESESESAATPEPDSEVDAGADTGDEPSGEPTADEVEPRESLASDAAKAALTEEDEDDSSGPGRLRRAAAFATGKVVIEEEDLEDPLWELEMALLQSDVEMQVAEEILETIREKLIGETRKQVESTGQLVSEALHDALYEVISVGQFDFDQRIAEADKPVTLIFTGINGVGKTTTIAKLAKYFEKQGYSTVLANGDTYRAGANEQIREHAEALDKKLIAHEQGGDPAAVIYDGVEYAEAHDIDIVLGDTAGRLHTSNDLMAQLEKIDRVVGPDLTLFVDEAVAGQDAVERARQFNDAAAIDGAILTKADADSNGGAAISIAYVTGKPILFLGVGQGYDHIEKFDPEQMVERLLGEDE.

Basic and acidic residues predominate over residues 1-26; the sequence is MFDGLKKKLNRFRNDVEETAEEKAEA. The disordered stretch occupies residues 1–163; sequence MFDGLKKKLN…DEDDSSGPGR (163 aa). Acidic residues predominate over residues 27–39; the sequence is AADEAESDADAEA. The span at 40–62 shows a compositional bias: low complexity; the sequence is ESAPADTDNAAVEPEASEPAAAD. Residues 63–81 are compositionally biased toward acidic residues; sequence PDADAVGDADAGSEADAVD. The segment covering 82–97 has biased composition (low complexity); that stretch reads AADAPADAESSSAAVE. The span at 112–134 shows a compositional bias: acidic residues; sequence PDSEVDAGADTGDEPSGEPTADE. Residues 265 to 272, 347 to 351, and 405 to 408 contribute to the GTP site; these read GINGVGKT, DTAGR, and TKAD.

Belongs to the GTP-binding SRP family. FtsY subfamily. Part of the signal recognition particle protein translocation system, which is composed of SRP and FtsY.

The protein resides in the cell membrane. It is found in the cytoplasm. It catalyses the reaction GTP + H2O = GDP + phosphate + H(+). Involved in targeting and insertion of nascent membrane proteins into the cytoplasmic membrane. Acts as a receptor for the complex formed by the signal recognition particle (SRP) and the ribosome-nascent chain (RNC). The polypeptide is Signal recognition particle receptor FtsY (Haloferax volcanii (strain ATCC 29605 / DSM 3757 / JCM 8879 / NBRC 14742 / NCIMB 2012 / VKM B-1768 / DS2) (Halobacterium volcanii)).